The primary structure comprises 1085 residues: SLIT-ROBO Rho GTPase-activating protein 1 (1085 aa).

Positions 19–314 (SQVKEIRAQL…AVDNLEPRSD (296 aa)) constitute an F-BAR domain. Residues 351–390 (VQAELMLRYQQLQSRLATLKIENEEVKKTTEATLQTIQDM) adopt a coiled-coil conformation. Serine 416 is subject to Phosphoserine. The interval 475-496 (YMTTRPPNVPPKPQKHRKSRPR) is disordered. Residues 506–694 (GDLETFVKDS…TIIIHHETIF (189 aa)) form the Rho-GAP domain. The 60-residue stretch at 743–802 (CEPIEAIAKFDYVGRSARELSFKKGASLLLYHRASEDWWEGRHNGIDGLVPHQYIVVQDM) folds into the SH3 domain. Residues 808-822 (DTLSQKADSEASSGP) show a composition bias toward polar residues. Positions 808 to 954 (DTLSQKADSE…TGFNDHKPLD (147 aa)) are disordered. Phosphoserine is present on residues serine 835 and serine 917. Residues 922 to 931 (SRHDSLKKID) are compositionally biased toward basic and acidic residues. The residue at position 932 (serine 932) is a Phosphoserine. Residues 937–946 (RSTSSGQYTG) show a composition bias toward polar residues. The stretch at 956-985 (ETIAQDIEETMNTALNELRELERQSTAKHA) forms a coiled coil. The span at 997–1011 (KNSPTPATSTESLSP) shows a compositional bias: polar residues. Disordered regions lie at residues 997 to 1038 (KNSP…MSTF) and 1051 to 1085 (KPPALRPKPAVLPKTNPTIGPAPPPQGPTDKSCTM). At serine 999 the chain carries Phosphoserine. Threonine 1001 carries the post-translational modification Phosphothreonine. Positions 1027 to 1037 (STSSSSDTMST) are enriched in low complexity. Serine 1032 carries the phosphoserine modification.

Homodimer. Forms a heterooligomer with SRGAP2 and SRGAP3 through its F-BAR domain. Interacts with ROBO1, CDC42 and RHOA. Interacts with FASLG. Expressed in brain, lung, kidney, and testis.

GTPase-activating protein for RhoA and Cdc42 small GTPases. Together with CDC42 seems to be involved in the pathway mediating the repulsive signaling of Robo and Slit proteins in neuronal migration. SLIT2, probably through interaction with ROBO1, increases the interaction of SRGAP1 with ROBO1 and inactivates CDC42. The chain is SLIT-ROBO Rho GTPase-activating protein 1 (SRGAP1) from Homo sapiens (Human).